The chain runs to 54 residues: Large ribosomal subunit protein bL33A (54 aa).

It belongs to the bacterial ribosomal protein bL33 family.

The sequence is that of Large ribosomal subunit protein bL33A from Mesoplasma florum (strain ATCC 33453 / NBRC 100688 / NCTC 11704 / L1) (Acholeplasma florum).